The primary structure comprises 207 residues: Ribosomal RNA small subunit methyltransferase G (207 aa).

S-adenosyl-L-methionine is bound by residues glycine 73, leucine 78, 124–125 (VE), and arginine 139.

The protein belongs to the methyltransferase superfamily. RNA methyltransferase RsmG family.

The protein resides in the cytoplasm. It carries out the reaction guanosine(527) in 16S rRNA + S-adenosyl-L-methionine = N(7)-methylguanosine(527) in 16S rRNA + S-adenosyl-L-homocysteine. Functionally, specifically methylates the N7 position of guanine in position 527 of 16S rRNA. The sequence is that of Ribosomal RNA small subunit methyltransferase G from Escherichia fergusonii (strain ATCC 35469 / DSM 13698 / CCUG 18766 / IAM 14443 / JCM 21226 / LMG 7866 / NBRC 102419 / NCTC 12128 / CDC 0568-73).